The primary structure comprises 353 residues: Photosystem II protein D1 (353 aa).

At Thr-2 the chain carries N-acetylthreonine. Thr-2 is modified (phosphothreonine). 3 consecutive transmembrane segments (helical) span residues 29-46, 118-133, and 142-156; these read YIGW…TATS, HFLL…EWEL, and WIAV…AATA. His-118 is a chlorophyll a binding site. Tyr-126 is a pheophytin a binding site. Residues Asp-170 and Glu-189 each contribute to the [CaMn4O5] cluster site. A helical membrane pass occupies residues 197-218; the sequence is FHMLGVAGVFGGSLFSAMHGSL. Residue His-198 coordinates chlorophyll a. Residues His-215 and 264–265 each bind a quinone; that span reads SF. Residue His-215 coordinates Fe cation. Residue His-272 coordinates Fe cation. A helical transmembrane segment spans residues 274–288; that stretch reads FLAAWPVVGIWFTAL. [CaMn4O5] cluster is bound by residues His-332, Glu-333, Asp-342, and Ala-344. The propeptide occupies 345–353; that stretch reads AVEVPSTNG.

The protein belongs to the reaction center PufL/M/PsbA/D family. As to quaternary structure, PSII is composed of 1 copy each of membrane proteins PsbA, PsbB, PsbC, PsbD, PsbE, PsbF, PsbH, PsbI, PsbJ, PsbK, PsbL, PsbM, PsbT, PsbX, PsbY, PsbZ, Psb30/Ycf12, at least 3 peripheral proteins of the oxygen-evolving complex and a large number of cofactors. It forms dimeric complexes. The cofactor is The D1/D2 heterodimer binds P680, chlorophylls that are the primary electron donor of PSII, and subsequent electron acceptors. It shares a non-heme iron and each subunit binds pheophytin, quinone, additional chlorophylls, carotenoids and lipids. D1 provides most of the ligands for the Mn4-Ca-O5 cluster of the oxygen-evolving complex (OEC). There is also a Cl(-1) ion associated with D1 and D2, which is required for oxygen evolution. The PSII complex binds additional chlorophylls, carotenoids and specific lipids.. In terms of processing, tyr-161 forms a radical intermediate that is referred to as redox-active TyrZ, YZ or Y-Z. C-terminally processed by CTPA; processing is essential to allow assembly of the oxygen-evolving complex and thus photosynthetic growth.

It localises to the plastid. It is found in the chloroplast thylakoid membrane. The catalysed reaction is 2 a plastoquinone + 4 hnu + 2 H2O = 2 a plastoquinol + O2. Functionally, photosystem II (PSII) is a light-driven water:plastoquinone oxidoreductase that uses light energy to abstract electrons from H(2)O, generating O(2) and a proton gradient subsequently used for ATP formation. It consists of a core antenna complex that captures photons, and an electron transfer chain that converts photonic excitation into a charge separation. The D1/D2 (PsbA/PsbD) reaction center heterodimer binds P680, the primary electron donor of PSII as well as several subsequent electron acceptors. The protein is Photosystem II protein D1 of Eucalyptus globulus subsp. globulus (Tasmanian blue gum).